The sequence spans 469 residues: Abscisic acid 8'-hydroxylase CYP707A2 (469 aa).

A helical membrane pass occupies residues 3 to 23 (FVSMLCLFTFISLTLLLIHSI). Cys-414 contributes to the heme binding site.

The protein belongs to the cytochrome P450 family. Heme serves as cofactor. In terms of tissue distribution, expressed at low levels in fruit.

It is found in the membrane. The catalysed reaction is 2-cis-(+)-abscisate + reduced [NADPH--hemoprotein reductase] + O2 = (+)-8'-hydroxyabscisate + oxidized [NADPH--hemoprotein reductase] + H2O + H(+). It participates in plant hormone degradation; abscisic acid degradation. Functionally, negative regulator of fruit ripening involved in the oxidative degradation of abscisic acid (ABA). The polypeptide is Abscisic acid 8'-hydroxylase CYP707A2 (Solanum lycopersicum (Tomato)).